Reading from the N-terminus, the 385-residue chain is Serine/threonine-protein kinase 52 (385 aa).

Residues 82–356 (LIIKTVLARG…PEMDEVVPML (275 aa)) enclose the Protein kinase domain. ATP contacts are provided by residues 88–96 (LARGTFGTV) and lysine 109. The active-site Proton acceptor is aspartate 227.

It belongs to the protein kinase superfamily. Ser/Thr protein kinase family. As to quaternary structure, binds to CBC1. Associates with PHOT1, PHOT2, BLUS1 and PM H(+)-ATPase (e.g. AHA1). In terms of processing, autophosphorylated. Phosphorylated by HT1 in response to low CO(2) concentrations. Expressed in guard cells.

It is found in the cytoplasm. It localises to the cytosol. It catalyses the reaction L-seryl-[protein] + ATP = O-phospho-L-seryl-[protein] + ADP + H(+). The catalysed reaction is L-threonyl-[protein] + ATP = O-phospho-L-threonyl-[protein] + ADP + H(+). In terms of biological role, serine/threonine protein kinase that phosphorylates proteins on serine and threonine residues. Collectively with CBC1, acts as a negative regulator of stomatal opening, probably via the inhibition of plasma membrane-type ATPases (AHA1 and AHA2) activity in guard cells, but in an abscisic acid (ABA)-independent manner. However, at low concentrations of CO(2), together with CBC1, stimulates stomatal opening via the inhibition of S-type anion channels in response to blue light (BL) and red light (RL), thus being a key component to maximize photosynthesis in the light under low CO(2) conditions. Required for temperature decrease in leaves. Downstream target of HIGH LEAF TEMPERATURE1 (HT1) during low CO(2)-induced stomatal opening. This is Serine/threonine-protein kinase 52 from Arabidopsis thaliana (Mouse-ear cress).